The sequence spans 443 residues: Proline--tRNA ligase (443 aa).

It belongs to the class-II aminoacyl-tRNA synthetase family. ProS type 2 subfamily. Homodimer.

It is found in the cytoplasm. The catalysed reaction is tRNA(Pro) + L-proline + ATP = L-prolyl-tRNA(Pro) + AMP + diphosphate. In terms of biological role, catalyzes the attachment of proline to tRNA(Pro) in a two-step reaction: proline is first activated by ATP to form Pro-AMP and then transferred to the acceptor end of tRNA(Pro). This is Proline--tRNA ligase from Zymomonas mobilis subsp. mobilis (strain ATCC 31821 / ZM4 / CP4).